The following is a 182-amino-acid chain: Ribulose bisphosphate carboxylase small subunit, chloroplastic 1 (182 aa).

The transit peptide at 1–42 (MASIMMNKSVVLSKECAKPLATPKVTLNKRGFATTIATKNRE) directs the protein to the chloroplast.

Belongs to the RuBisCO small chain family. In terms of assembly, heterohexadecamer of 8 large and 8 small subunits.

It localises to the plastid. It is found in the chloroplast. Its function is as follows. RuBisCO catalyzes two reactions: the carboxylation of D-ribulose 1,5-bisphosphate, the primary event in carbon dioxide fixation, as well as the oxidative fragmentation of the pentose substrate. Both reactions occur simultaneously and in competition at the same active site. Although the small subunit is not catalytic it is essential for maximal activity. This chain is Ribulose bisphosphate carboxylase small subunit, chloroplastic 1, found in Acetabularia acetabulum (Mermaid's wine glass).